We begin with the raw amino-acid sequence, 479 residues long: MKGGNYTSLGTCSGINVSGNVAGTRKMSLGKSIKMYLTIFILTTCIYMALYQYHISREPFAASEVVKHQEKSSSYIASYLWSPISLLMANSSSNTNNNSTTTSTTTTTAPTTPTTTTTTTVGSVGQKLGASSISSIRMVSLAATIPSFKSTLSESRSVSLGGHQKTATVKTSTTITTRTTASGLATTKLSATTRTTAKTSAKLSAATTPTASHMENGYKTRPTFVAASLPPPLYIITPTYRRPEQLAELTRLGYTLKHVVNLLWLVIEDANKTNPLVGHTLDRIGVPYEYMVAPMPEKYKQTKKAKPRGVSNRNRGLEYLREHATEGVLYFADDDNTYDISIFEQMRYISKVAMWPVGLVTKTGVSSPIIQAGKLVGYYDGWIGGRKYPVDMAGFAVSVKFLKERPNAQMPFKPGYEEDGFLRSLAPLDDAEIELLADECRDILTWHTQTKKNAPAQALNRTRYKNTNLEHIDRLLVRP.

Over Met-1–Lys-34 the chain is Cytoplasmic. A helical; Signal-anchor for type II membrane protein membrane pass occupies residues Met-35–Leu-50. Over Tyr-51–Pro-479 the chain is Lumenal. Asn-90, Asn-97, Asn-98, and Asn-271 each carry an N-linked (GlcNAc...) asparagine glycan. Residues Asn-94–Thr-120 are compositionally biased toward low complexity. Residues Asn-94–Gly-122 form a disordered region. Asp-335 serves as a coordination point for Mn(2+). Residue Glu-418 is the Proton acceptor of the active site. Asn-460 is a glycosylation site (N-linked (GlcNAc...) asparagine).

It belongs to the glycosyltransferase 43 family. Mn(2+) serves as cofactor.

The protein localises to the golgi apparatus membrane. The enzyme catalyses 3-O-(beta-D-galactosyl-(1-&gt;3)-beta-D-galactosyl-(1-&gt;4)-beta-D-xylosyl)-L-seryl-[protein] + UDP-alpha-D-glucuronate = 3-O-(beta-D-GlcA-(1-&gt;3)-beta-D-Gal-(1-&gt;3)-beta-D-Gal-(1-&gt;4)-beta-D-Xyl)-L-seryl-[protein] + UDP + H(+). The protein operates within protein modification; protein glycosylation. In terms of biological role, involved in the biosynthesis of L2/HNK-1 carbohydrate epitope on both glycolipids and glycoproteins. Enzyme has a broad specificity. This is Galactosylgalactosylxylosylprotein 3-beta-glucuronosyltransferase P (GlcAT-P) from Drosophila melanogaster (Fruit fly).